We begin with the raw amino-acid sequence, 295 residues long: ATP synthase gamma chain (295 aa).

It belongs to the ATPase gamma chain family. F-type ATPases have 2 components, CF(1) - the catalytic core - and CF(0) - the membrane proton channel. CF(1) has five subunits: alpha(3), beta(3), gamma(1), delta(1), epsilon(1). CF(0) has three main subunits: a, b and c.

The protein localises to the cell membrane. Functionally, produces ATP from ADP in the presence of a proton gradient across the membrane. The gamma chain is believed to be important in regulating ATPase activity and the flow of protons through the CF(0) complex. The polypeptide is ATP synthase gamma chain (Acetivibrio thermocellus (strain ATCC 27405 / DSM 1237 / JCM 9322 / NBRC 103400 / NCIMB 10682 / NRRL B-4536 / VPI 7372) (Clostridium thermocellum)).